A 95-amino-acid polypeptide reads, in one-letter code: Aspartyl/glutamyl-tRNA(Asn/Gln) amidotransferase subunit C (95 aa).

It belongs to the GatC family. As to quaternary structure, heterotrimer of A, B and C subunits.

It carries out the reaction L-glutamyl-tRNA(Gln) + L-glutamine + ATP + H2O = L-glutaminyl-tRNA(Gln) + L-glutamate + ADP + phosphate + H(+). The enzyme catalyses L-aspartyl-tRNA(Asn) + L-glutamine + ATP + H2O = L-asparaginyl-tRNA(Asn) + L-glutamate + ADP + phosphate + 2 H(+). Its function is as follows. Allows the formation of correctly charged Asn-tRNA(Asn) or Gln-tRNA(Gln) through the transamidation of misacylated Asp-tRNA(Asn) or Glu-tRNA(Gln) in organisms which lack either or both of asparaginyl-tRNA or glutaminyl-tRNA synthetases. The reaction takes place in the presence of glutamine and ATP through an activated phospho-Asp-tRNA(Asn) or phospho-Glu-tRNA(Gln). This chain is Aspartyl/glutamyl-tRNA(Asn/Gln) amidotransferase subunit C, found in Pseudomonas fluorescens (strain SBW25).